The following is an 85-amino-acid chain: Protein AC4 (85 aa).

Gly-2 carries the N-myristoyl glycine; by host lipid modification. The tract at residues 44–63 (RAPMSNPTSRKTGTVSNGDC) is disordered. Over residues 46-62 (PMSNPTSRKTGTVSNGD) the composition is skewed to polar residues.

It belongs to the geminiviridae protein AC4/C4 family.

It is found in the host cell membrane. Pathogenicity determinant. May act as a suppressor of RNA-mediated gene silencing, also known as post-transcriptional gene silencing (PTGS), a mechanism of plant viral defense that limits the accumulation of viral RNAs. The protein is Protein AC4 of Potato yellow mosaic virus (isolate Venezuela) (PYMV).